The chain runs to 394 residues: Probable tRNA sulfurtransferase (394 aa).

The region spanning 61-168 (DETVATLSRI…PMINIYSEEI (108 aa)) is the THUMP domain. ATP is bound by residues 185–186 (LL), 210–211 (YF), Arg267, Gly289, and Gln298.

Belongs to the ThiI family.

It localises to the cytoplasm. It carries out the reaction [ThiI sulfur-carrier protein]-S-sulfanyl-L-cysteine + a uridine in tRNA + 2 reduced [2Fe-2S]-[ferredoxin] + ATP + H(+) = [ThiI sulfur-carrier protein]-L-cysteine + a 4-thiouridine in tRNA + 2 oxidized [2Fe-2S]-[ferredoxin] + AMP + diphosphate. The catalysed reaction is [ThiS sulfur-carrier protein]-C-terminal Gly-Gly-AMP + S-sulfanyl-L-cysteinyl-[cysteine desulfurase] + AH2 = [ThiS sulfur-carrier protein]-C-terminal-Gly-aminoethanethioate + L-cysteinyl-[cysteine desulfurase] + A + AMP + 2 H(+). The protein operates within cofactor biosynthesis; thiamine diphosphate biosynthesis. In terms of biological role, catalyzes the ATP-dependent transfer of a sulfur to tRNA to produce 4-thiouridine in position 8 of tRNAs, which functions as a near-UV photosensor. Also catalyzes the transfer of sulfur to the sulfur carrier protein ThiS, forming ThiS-thiocarboxylate. This is a step in the synthesis of thiazole, in the thiamine biosynthesis pathway. The sulfur is donated as persulfide by IscS. In Agathobacter rectalis (strain ATCC 33656 / DSM 3377 / JCM 17463 / KCTC 5835 / VPI 0990) (Eubacterium rectale), this protein is Probable tRNA sulfurtransferase.